A 257-amino-acid chain; its full sequence is UPF0246 protein Sbal223_3241 (257 aa).

Belongs to the UPF0246 family.

The chain is UPF0246 protein Sbal223_3241 from Shewanella baltica (strain OS223).